A 153-amino-acid chain; its full sequence is Mitotic-spindle organizing protein 2 (153 aa).

The disordered stretch occupies residues 80-153 (KVSETSTGDA…SSSSSQLTSN (74 aa)). 2 stretches are compositionally biased toward polar residues: residues 81-99 (VSETSTGDASSTSHTTAVP) and 107-133 (KMSSGQGEKSARESSSQRVPRQVSATR). Over residues 134-153 (GQKSTKSSGSSSSSSQLTSN) the composition is skewed to low complexity.

Belongs to the MOZART2 family. In terms of assembly, part of the gamma-tubulin complex. Interacts with TUBG1.

It localises to the cytoplasm. The protein resides in the cytoskeleton. The protein localises to the microtubule organizing center. It is found in the centrosome. Its subcellular location is the spindle. This is Mitotic-spindle organizing protein 2 (mzt2) from Danio rerio (Zebrafish).